A 452-amino-acid chain; its full sequence is MEFQAVVMAVGGGSRMTDLTSSIPKPLLPAGNKPLIWYPLNLLERVGFEEVIVVTTRDVQKALCAEFKMKMKPDIVCIPDDADMGTADSLRYMYPKLKTDVLVLSCDLITDVALHEVVDLFRAYDASLAMLMRKGQDSLEPVPGQKGKKKAVEQRDFIGVDSTGKRLLFMANEADLDEELVIKGSILQKYPRIRFHTDLVDAHLYCLKKYVVDFLMENGSITSIRSELIPYLVRKQFSSASSQQGQEEKEEDLKKKELKSLDIYSFLKEANTLNLAPYDACWNACRGDRWEDLPRSQVRCYVHIMKEGLCSRVSTLGLYMEANRQVPKLLSALCPEEPLVHSSAQIVSKHLVGVDSLIGPETQIGEKSSIKRSVIGSSCLIKDRVTITNCLLMNSVTVEEGSNIQGSVICNNAVIEKGADIKDCLIGSGQRIEAKAKRVNEVIVGSDQLMEI.

M1 is modified (N-acetylmethionine). Residue S260 is modified to Phosphoserine.

It belongs to the eIF-2B gamma/epsilon subunits family. In terms of assembly, component of the translation initiation factor 2B (eIF2B) complex which is a heterodecamer of two sets of five different subunits: alpha, beta, gamma, delta and epsilon. Subunits alpha, beta and delta comprise a regulatory subcomplex and subunits epsilon and gamma comprise a catalytic subcomplex. Within the complex, the hexameric regulatory complex resides at the center, with the two heterodimeric catalytic subcomplexes bound on opposite sides.

The protein localises to the cytoplasm. The protein resides in the cytosol. Its activity is regulated as follows. Activated by the chemical integrated stress response (ISR) inhibitor ISRIB which stimulates guanine nucleotide exchange factor activity for both phosphorylated and unphosphorylated eIF2. Functionally, acts as a component of the translation initiation factor 2B (eIF2B) complex, which catalyzes the exchange of GDP for GTP on the eukaryotic initiation factor 2 (eIF2) complex gamma subunit. Its guanine nucleotide exchange factor activity is repressed when bound to eIF2 complex phosphorylated on the alpha subunit, thereby limiting the amount of methionyl-initiator methionine tRNA available to the ribosome and consequently global translation is repressed. In Macaca fascicularis (Crab-eating macaque), this protein is Translation initiation factor eIF2B subunit gamma (EIF2B3).